Consider the following 448-residue polypeptide: Damage-control phosphatase ARMT1 (448 aa).

Mn(2+)-binding residues include Asp257 and Asn258. Substrate is bound at residue 257-258 (DN). Glu262 and Asp295 together coordinate S-adenosyl-L-methionine. Asp295 contacts Mn(2+). Residues 371-375 (DLNYR) and Lys408 contribute to the substrate site. The short motif at 405 to 408 (RTLK) is the Subfamily III RTxK motif element.

It belongs to the damage-control phosphatase family. Sugar phosphate phosphatase III subfamily. It depends on Mn(2+) as a cofactor. The cofactor is Ni(2+). In terms of processing, automethylated.

It carries out the reaction beta-D-fructose 1-phosphate + H2O = D-fructose + phosphate. The enzyme catalyses beta-D-fructose 6-phosphate = dihydroxyacetone + D-glyceraldehyde 3-phosphate. The catalysed reaction is L-glutamyl-[protein] + S-adenosyl-L-methionine = [protein]-L-glutamate 5-O-methyl ester + S-adenosyl-L-homocysteine. In terms of biological role, metal-dependent phosphatase that shows phosphatase activity against several substrates, including fructose-1-phosphate and fructose-6-phosphate. Its preference for fructose-1-phosphate, a strong glycating agent that causes DNA damage rather than a canonical yeast metabolite, suggests a damage-control function in hexose phosphate metabolism. Has also been shown to have O-methyltransferase activity that methylates glutamate residues of target proteins to form gamma-glutamyl methyl ester residues. Possibly methylates PCNA, suggesting it is involved in the DNA damage response. This is Damage-control phosphatase ARMT1 from Danio rerio (Zebrafish).